A 409-amino-acid polypeptide reads, in one-letter code: Tyrosine--tRNA ligase (409 aa).

Tyr-39 contributes to the L-tyrosine binding site. The 'HIGH' region motif lies at 44–53 (PTAASLHVGS). L-tyrosine is bound by residues Tyr-176 and Gln-180. The 'KMSKS' region motif lies at 236 to 240 (KMGKT). Lys-239 serves as a coordination point for ATP. Residues 346 to 408 (ISLVDALVGL…GKKAHGVIQA (63 aa)) form the S4 RNA-binding domain.

Belongs to the class-I aminoacyl-tRNA synthetase family. TyrS type 1 subfamily. In terms of assembly, homodimer.

The protein localises to the cytoplasm. The catalysed reaction is tRNA(Tyr) + L-tyrosine + ATP = L-tyrosyl-tRNA(Tyr) + AMP + diphosphate + H(+). In terms of biological role, catalyzes the attachment of tyrosine to tRNA(Tyr) in a two-step reaction: tyrosine is first activated by ATP to form Tyr-AMP and then transferred to the acceptor end of tRNA(Tyr). This Zymomonas mobilis subsp. mobilis (strain ATCC 31821 / ZM4 / CP4) protein is Tyrosine--tRNA ligase.